The primary structure comprises 658 residues: DNA mismatch repair protein MutL (658 aa).

Positions 114–130 (RQEDSSHATQVKAEDGK) are enriched in basic and acidic residues. Disordered regions lie at residues 114–137 (RQEDSSHATQVKAEDGKLSSPTAA) and 369–391 (DYPTGNKPDTRNAFGSSGKTAPM).

This sequence belongs to the DNA mismatch repair MutL/HexB family.

This protein is involved in the repair of mismatches in DNA. It is required for dam-dependent methyl-directed DNA mismatch repair. May act as a 'molecular matchmaker', a protein that promotes the formation of a stable complex between two or more DNA-binding proteins in an ATP-dependent manner without itself being part of a final effector complex. The polypeptide is DNA mismatch repair protein MutL (Neisseria meningitidis serogroup C (strain 053442)).